Here is a 56-residue protein sequence, read N- to C-terminus: Prokaryotic ubiquitin-like protein UBact (56 aa).

The tract at residues 1–56 (MPERIVKPMPQDPVTKPGDEGPRTPNVPKPDTERLLERMRRVDPRQAQRYRQRSGE) is disordered. Residues 30–46 (PDTERLLERMRRVDPRQ) show a composition bias toward basic and acidic residues. Residue Glu-56 forms an Isoglutamyl lysine isopeptide (Glu-Lys) (interchain with K-? in acceptor proteins) linkage.

This sequence belongs to the ubiquitin-like protein UBact family.

In terms of biological role, may function as a protein modifier covalently attached to lysine residues of substrate proteins. This may serve to target the modified proteins for degradation by proteasomes. This is Prokaryotic ubiquitin-like protein UBact from Acetithermum autotrophicum.